Consider the following 352-residue polypeptide: Chorismate synthase (352 aa).

Arg48 contacts NADP(+). FMN contacts are provided by residues 125–127 (RSS), 237–238 (NA), Gly278, 293–297 (KPTSS), and Arg319.

It belongs to the chorismate synthase family. Homotetramer. It depends on FMNH2 as a cofactor.

The enzyme catalyses 5-O-(1-carboxyvinyl)-3-phosphoshikimate = chorismate + phosphate. It participates in metabolic intermediate biosynthesis; chorismate biosynthesis; chorismate from D-erythrose 4-phosphate and phosphoenolpyruvate: step 7/7. Its function is as follows. Catalyzes the anti-1,4-elimination of the C-3 phosphate and the C-6 proR hydrogen from 5-enolpyruvylshikimate-3-phosphate (EPSP) to yield chorismate, which is the branch point compound that serves as the starting substrate for the three terminal pathways of aromatic amino acid biosynthesis. This reaction introduces a second double bond into the aromatic ring system. The chain is Chorismate synthase from Francisella tularensis subsp. mediasiatica (strain FSC147).